The following is a 250-amino-acid chain: MSGHSKWSTIKRKKGAIDSKRGKIFTKIIKEITLAARLGGGDTEGNSRLRQAILAAKNENMPRDNIDRAIKKGTGEIGGGESYEEVTYEGYGPGGVAVLVEVMTDNKNRTVAEIRHIFSKHGGNLGGNGCVSWLFEKKGSIVFDRDLIDEDALMELALEAGAEDIREEESQMDVITDPSMFDKVRDVLEGKGMKYVQASIEMVPQNTIRLDEGKAEQMLKMIEKLEDNDDVQNVYANFDIPDEIMEKLSA.

The protein belongs to the TACO1 family.

It localises to the cytoplasm. The sequence is that of Probable transcriptional regulatory protein SYNAS_07390 from Syntrophus aciditrophicus (strain SB).